The primary structure comprises 427 residues: Phosphoribosylamine--glycine ligase (427 aa).

Positions 110–315 (KDFCQRHGLP…IVPILLAAAK (206 aa)) constitute an ATP-grasp domain. 136-196 (LDTLEAPFVI…EEFMHGEEAS (61 aa)) contacts ATP. Mg(2+)-binding residues include E285 and N287.

The protein belongs to the GARS family. Mg(2+) is required as a cofactor. Requires Mn(2+) as cofactor.

It catalyses the reaction 5-phospho-beta-D-ribosylamine + glycine + ATP = N(1)-(5-phospho-beta-D-ribosyl)glycinamide + ADP + phosphate + H(+). Its pathway is purine metabolism; IMP biosynthesis via de novo pathway; N(1)-(5-phospho-D-ribosyl)glycinamide from 5-phospho-alpha-D-ribose 1-diphosphate: step 2/2. This Caulobacter vibrioides (strain ATCC 19089 / CIP 103742 / CB 15) (Caulobacter crescentus) protein is Phosphoribosylamine--glycine ligase.